Reading from the N-terminus, the 1132-residue chain is Error-prone DNA polymerase (1132 aa).

It belongs to the DNA polymerase type-C family. DnaE2 subfamily.

The protein localises to the cytoplasm. The catalysed reaction is DNA(n) + a 2'-deoxyribonucleoside 5'-triphosphate = DNA(n+1) + diphosphate. DNA polymerase involved in damage-induced mutagenesis and translesion synthesis (TLS). It is not the major replicative DNA polymerase. In Anaeromyxobacter dehalogenans (strain 2CP-C), this protein is Error-prone DNA polymerase.